A 146-amino-acid chain; its full sequence is Putative pre-16S rRNA nuclease (146 aa).

The protein belongs to the YqgF nuclease family.

Its subcellular location is the cytoplasm. Could be a nuclease involved in processing of the 5'-end of pre-16S rRNA. The sequence is that of Putative pre-16S rRNA nuclease from Burkholderia thailandensis (strain ATCC 700388 / DSM 13276 / CCUG 48851 / CIP 106301 / E264).